The sequence spans 143 residues: Ribonuclease P protein component 2 (143 aa).

It belongs to the eukaryotic/archaeal RNase P protein component 2 family. In terms of assembly, consists of a catalytic RNA component and at least 4-5 protein subunits.

The protein resides in the cytoplasm. The catalysed reaction is Endonucleolytic cleavage of RNA, removing 5'-extranucleotides from tRNA precursor.. In terms of biological role, part of ribonuclease P, a protein complex that generates mature tRNA molecules by cleaving their 5'-ends. The protein is Ribonuclease P protein component 2 of Saccharolobus islandicus (strain Y.N.15.51 / Yellowstone #2) (Sulfolobus islandicus).